The following is a 274-amino-acid chain: SPbeta prophage-derived UPF0714 protein YoqZ (274 aa).

Belongs to the UPF0714 family.

In Bacillus subtilis (strain 168), this protein is SPbeta prophage-derived UPF0714 protein YoqZ (yoqZ).